A 110-amino-acid polypeptide reads, in one-letter code: UPF0339 protein YegP (110 aa).

Tandem repeats lie at residues 10 to 58 (SSDS…RYEK) and 61 to 109 (ASNG…VKDN).

It belongs to the UPF0339 family. Duplicated subfamily.

The chain is UPF0339 protein YegP (yegP) from Escherichia coli O157:H7.